We begin with the raw amino-acid sequence, 298 residues long: MDQKQIEEIVRSVMASMGQDVPQPVAPSTQAGAKPQCAAPTVTESCALDLGSAEAKAWIGVENPHRADVLTELRRSTAARVCTGRAGPRPRTQALLRFLADHSRSKDTVLKEVPEEWVKAQGLLEVRSEISDKNLYLTRPDMGRRLSPEAIDALKSQCVMNPDVQVVVSDGLSTDAITANYEEILPPLLAGLKQAGLNVGTPFFVRYGRVKIEDQIGEILGAKVVILLVGERPGLGQSESLSCYAVYSPRVATTVEADRTCISNIHQGGTPPVEAAAVIVDLAKRMLEQKASGINMTR.

Positions 210, 231, and 261 each coordinate adenosylcob(III)alamin.

Belongs to the EutC family. In terms of assembly, the basic unit is a heterodimer which dimerizes to form tetramers. The heterotetramers trimerize; 6 large subunits form a core ring with 6 small subunits projecting outwards. It depends on adenosylcob(III)alamin as a cofactor.

It localises to the bacterial microcompartment. The catalysed reaction is ethanolamine = acetaldehyde + NH4(+). The protein operates within amine and polyamine degradation; ethanolamine degradation. In terms of biological role, catalyzes the deamination of various vicinal amino-alcohols to oxo compounds. Allows this organism to utilize ethanolamine as the sole source of nitrogen and carbon in the presence of external vitamin B12. The chain is Ethanolamine ammonia-lyase small subunit from Salmonella agona (strain SL483).